A 493-amino-acid polypeptide reads, in one-letter code: Leucine-rich repeat-containing protein 14 (493 aa).

The LRR 1; degenerate repeat unit spans residues 111 to 146; that stretch reads KHTLRVLDMTGLLDDGVEQDPGTMSMWDCTAAVART. Residues 194 to 218 form an LRR 2; degenerate repeat; it reads RLCCRDLRAEDLPMRNTVALLQLLD. An LRR 3; degenerate repeat occupies 219 to 246; that stretch reads AGCLRRVDLRFNNLGLRGLSVIIPHVAR. An LRR 4; degenerate repeat occupies 247-282; that stretch reads FQHLASLRLHYVHGDSRQPSVDGEDNFRYFLAQMGR. LRR repeat units follow at residues 283-307, 308-339, 340-360, 364-391, and 392-416; these read FTCL…LSTL, QSPL…VHLK, KLDL…QGLL, AATL…VLTR, and CASL…LLRD.

The protein belongs to the PRAME family. LRRC14 subfamily. In terms of assembly, interacts with IKBKB; disrupts IKBKB-IKBKG interaction preventing I-kappa-B-kinase (IKK) core complex formation and leading to a decrease of IKBKB phosphorylation and NF-kappaB activation. Interacts with CHUK.

It localises to the cytoplasm. Functionally, negatively regulates Toll-like receptor-mediated NF-kappa-B signaling by disrupting IKK core complex formation through interaction with IKBKB. The polypeptide is Leucine-rich repeat-containing protein 14 (Bos taurus (Bovine)).